We begin with the raw amino-acid sequence, 381 residues long: Heterogeneous nuclear rnp K-like protein 2 (381 aa).

The disordered stretch occupies residues 1–34 (MSQFFEAATPVAIPTNNTNGGSSDAGSAATGGAP). Over residues 15-33 (TNNTNGGSSDAGSAATGGA) the composition is skewed to low complexity. KH domains are found at residues 43 to 107 (TINH…IGDI), 156 to 221 (IGYV…LIEI), and 258 to 326 (NTRI…ESML). The tract at residues 357–381 (RSDSASFLEEKEEPQKNHDNKEEQS) is disordered. A phosphoserine mark is found at Ser-358, Ser-360, and Ser-362. Residues 369-381 (EPQKNHDNKEEQS) are compositionally biased toward basic and acidic residues.

The protein belongs to the HEK2 family. As to quaternary structure, binds RNA. In terms of processing, phosphorylated by the plasma membrane-Anchored casein kinase YCK1. Phosphorylation at its C-terminus reduces its RNA-binding capacity.

It is found in the cytoplasm. It localises to the P-body. The protein localises to the nucleus. The protein resides in the chromosome. Its subcellular location is the telomere. Functionally, RNA-binding protein involved in the correct localization of transcripts in the cell. RNA localization is a widespread mechanism for achieving localized protein synthesis. Required for the asymmetric localization to the daughter cell nucleus of the ASH1 transcript, coding for a specific repressor of transcription. Overexpression inhibits translation of the ASH1 transcript. Involved in the stability of transcripts, like the MTL1 mRNA. Involved in structural and functional organization of telomeric chromatin and regulates silencing at the HMR locus. This chain is Heterogeneous nuclear rnp K-like protein 2 (HEK2), found in Saccharomyces cerevisiae (strain RM11-1a) (Baker's yeast).